A 231-amino-acid chain; its full sequence is mRNA-decapping enzyme subunit 1 (231 aa).

The disordered stretch occupies residues 92-120 (QNGSNNIQVNNGSDNSNRNSSGNGNSYKS). The span at 101–120 (NNGSDNSNRNSSGNGNSYKS) shows a compositional bias: low complexity.

The protein belongs to the DCP1 family. In terms of assembly, component of the decapping complex composed of DCP1 and DCP2. Interacts with mRNAs, DHH1, LSM1, LSM2, LSM3, LSM4, LSM5, LSM6, LSM7, and the cap-binding proteins PAB1 and TIF4632/eIF-4G. Post-translationally, phosphorylated.

Its subcellular location is the cytoplasm. The protein resides in the P-body. Its function is as follows. Component of the decapping complex necessary for the degradation of mRNAs, both in normal mRNA turnover and in nonsense-mediated mRNA decay. Removes the 7-methyl guanine cap structure from mRNA molecules, yielding a 5'-phosphorylated mRNA fragment and 7m-GDP. Decapping is the major pathway of mRNA degradation in yeast. It occurs through deadenylation, decapping and subsequent 5' to 3' exonucleolytic decay of the transcript body. DCP1 is activated by the DEAD-box helicase DHH1 and destabilizes the eIF-4F cap-binding complex from the mRNA. The protein is mRNA-decapping enzyme subunit 1 (DCP1) of Saccharomyces cerevisiae (strain ATCC 204508 / S288c) (Baker's yeast).